Consider the following 568-residue polypeptide: Sulfite reductase [NADPH] hemoprotein beta-component (568 aa).

Positions 426, 432, 471, and 475 each coordinate [4Fe-4S] cluster. Residue Cys475 participates in siroheme binding.

This sequence belongs to the nitrite and sulfite reductase 4Fe-4S domain family. In terms of assembly, alpha(8)-beta(8). The alpha component is a flavoprotein, the beta component is a hemoprotein. Requires siroheme as cofactor. It depends on [4Fe-4S] cluster as a cofactor.

The catalysed reaction is hydrogen sulfide + 3 NADP(+) + 3 H2O = sulfite + 3 NADPH + 4 H(+). The protein operates within sulfur metabolism; hydrogen sulfide biosynthesis; hydrogen sulfide from sulfite (NADPH route): step 1/1. In terms of biological role, component of the sulfite reductase complex that catalyzes the 6-electron reduction of sulfite to sulfide. This is one of several activities required for the biosynthesis of L-cysteine from sulfate. The sequence is that of Sulfite reductase [NADPH] hemoprotein beta-component from Xylella fastidiosa (strain M23).